The chain runs to 287 residues: Large ribosomal subunit protein uL2 (287 aa).

The disordered stretch occupies residues 221 to 287; that stretch reads RGSVMNPCDH…SKRSRGGRDS (67 aa). A compositionally biased stretch (basic residues) spans 258–287; the sequence is KTRKKNKPSNKLVVRRRRRVSKRSRGGRDS.

It belongs to the universal ribosomal protein uL2 family. As to quaternary structure, part of the 50S ribosomal subunit. Forms a bridge to the 30S subunit in the 70S ribosome.

Its function is as follows. One of the primary rRNA binding proteins. Required for association of the 30S and 50S subunits to form the 70S ribosome, for tRNA binding and peptide bond formation. It has been suggested to have peptidyltransferase activity; this is somewhat controversial. Makes several contacts with the 16S rRNA in the 70S ribosome. In Prochlorococcus marinus (strain AS9601), this protein is Large ribosomal subunit protein uL2.